The chain runs to 271 residues: Thiazole synthase (271 aa).

The Schiff-base intermediate with DXP role is filled by K104. Residues G165, 192–193 (AG), and 214–215 (NT) contribute to the 1-deoxy-D-xylulose 5-phosphate site.

Belongs to the ThiG family. In terms of assembly, homotetramer. Forms heterodimers with either ThiH or ThiS.

The protein localises to the cytoplasm. The enzyme catalyses [ThiS sulfur-carrier protein]-C-terminal-Gly-aminoethanethioate + 2-iminoacetate + 1-deoxy-D-xylulose 5-phosphate = [ThiS sulfur-carrier protein]-C-terminal Gly-Gly + 2-[(2R,5Z)-2-carboxy-4-methylthiazol-5(2H)-ylidene]ethyl phosphate + 2 H2O + H(+). It functions in the pathway cofactor biosynthesis; thiamine diphosphate biosynthesis. Its function is as follows. Catalyzes the rearrangement of 1-deoxy-D-xylulose 5-phosphate (DXP) to produce the thiazole phosphate moiety of thiamine. Sulfur is provided by the thiocarboxylate moiety of the carrier protein ThiS. In vitro, sulfur can be provided by H(2)S. This chain is Thiazole synthase, found in Burkholderia thailandensis (strain ATCC 700388 / DSM 13276 / CCUG 48851 / CIP 106301 / E264).